Here is a 255-residue protein sequence, read N- to C-terminus: tRNA (adenine(58)-N(1))-methyltransferase TrmI (255 aa).

S-adenosyl-L-methionine is bound by residues 104–107 (SGGL), Glu-125, His-130, Glu-155, and Asp-170.

This sequence belongs to the class I-like SAM-binding methyltransferase superfamily. TRM61 family. As to quaternary structure, homotetramer composed of a dimer of dimers.

It catalyses the reaction adenosine(58) in tRNA + S-adenosyl-L-methionine = N(1)-methyladenosine(58) in tRNA + S-adenosyl-L-homocysteine + H(+). Functionally, catalyzes the S-adenosyl-L-methionine-dependent formation of N(1)-methyladenine at position 58 (m1A58) in tRNA. This chain is tRNA (adenine(58)-N(1))-methyltransferase TrmI (trmI), found in Thermus thermophilus (strain ATCC 27634 / DSM 579 / HB8).